The chain runs to 81 residues: Sulfur carrier protein TusA (81 aa).

Cysteine 19 acts as the Cysteine persulfide intermediate in catalysis.

This sequence belongs to the sulfur carrier protein TusA family.

The protein localises to the cytoplasm. In terms of biological role, sulfur carrier protein which probably makes part of a sulfur-relay system. This is Sulfur carrier protein TusA from Shewanella frigidimarina (strain NCIMB 400).